Reading from the N-terminus, the 54-residue chain is uncharacterized protein (54 aa).

An N-terminal signal peptide occupies residues 1–13; that stretch reads MLLCFHMCQRIMW.

The protein resides in the secreted. This is an uncharacterized protein from Saccharomyces cerevisiae (strain ATCC 204508 / S288c) (Baker's yeast).